Reading from the N-terminus, the 362-residue chain is Peptide chain release factor 1 (362 aa).

An N5-methylglutamine modification is found at glutamine 237.

This sequence belongs to the prokaryotic/mitochondrial release factor family. In terms of processing, methylated by PrmC. Methylation increases the termination efficiency of RF1.

It localises to the cytoplasm. In terms of biological role, peptide chain release factor 1 directs the termination of translation in response to the peptide chain termination codons UAG and UAA. The polypeptide is Peptide chain release factor 1 (Aliivibrio fischeri (strain ATCC 700601 / ES114) (Vibrio fischeri)).